The sequence spans 155 residues: Aspartate carbamoyltransferase regulatory chain (155 aa).

4 residues coordinate Zn(2+): cysteine 113, cysteine 118, cysteine 141, and cysteine 144.

Belongs to the PyrI family. Contains catalytic and regulatory chains. Zn(2+) serves as cofactor.

Functionally, involved in allosteric regulation of aspartate carbamoyltransferase. The protein is Aspartate carbamoyltransferase regulatory chain of Methanococcus aeolicus (strain ATCC BAA-1280 / DSM 17508 / OCM 812 / Nankai-3).